The following is a 170-amino-acid chain: Shikimate kinase (170 aa).

Residue 11 to 16 (LSGKST) coordinates ATP. S15 lines the Mg(2+) pocket. Residues D33, R57, and G79 each coordinate substrate. R119 serves as a coordination point for ATP. R137 serves as a coordination point for substrate.

The protein belongs to the shikimate kinase family. Monomer. The cofactor is Mg(2+).

It is found in the cytoplasm. The enzyme catalyses shikimate + ATP = 3-phosphoshikimate + ADP + H(+). It functions in the pathway metabolic intermediate biosynthesis; chorismate biosynthesis; chorismate from D-erythrose 4-phosphate and phosphoenolpyruvate: step 5/7. Its function is as follows. Catalyzes the specific phosphorylation of the 3-hydroxyl group of shikimic acid using ATP as a cosubstrate. The protein is Shikimate kinase of Clostridium botulinum (strain 657 / Type Ba4).